We begin with the raw amino-acid sequence, 326 residues long: MTVHGNTKTSPMVTLLAGGVSGVIAKSTIAPLERVKILYQVKSKMYSFNSVYGLMKNIIKNEGLAGLWKGNTATILRIFPYSAIQWTSYDYLKNNFVTDKKSSVQIFIAGSLGFSCAILLTYPLDVIRARLALSYSNNNNNNSINSKNLNSSTQPPKVLKNGIGAVNIEKSIDFNGYKTKGLFKGIWRGILPTLYGSIPYAGVGYSSFEYFKRIAPDSFRNEKGDVIGIYKLISGGVAGGLGQTAAYPLDVVRRRIQTTGYGDGKGVENLKHSTLKTMFTIFQKEGIYALFKGISINYIKVIPTNGVAFLTYETLCDYFNSKLNKN.

Solcar repeat units lie at residues 9–95, 101–214, and 226–318; these read TSPM…LKNN, KSSV…FKRI, and VIGI…LCDY. The next 6 membrane-spanning stretches (helical) occupy residues 12 to 32, 64 to 84, 104 to 124, 185 to 205, 226 to 246, and 290 to 310; these read MVTL…IAPL, LAGL…YSAI, VQIF…TYPL, GIWR…GVGY, VIGI…QTAA, and LFKG…VAFL.

Belongs to the mitochondrial carrier (TC 2.A.29) family.

It is found in the mitochondrion inner membrane. Mitochondrial solute carriers shuttle metabolites, nucleotides, and cofactors through the mitochondrial inner membrane. May be involved in the accumulation of coenzyme A in the mitochondrial matrix. The sequence is that of Mitochondrial substrate carrier family protein R (mcfR) from Dictyostelium discoideum (Social amoeba).